Here is a 117-residue protein sequence, read N- to C-terminus: MDKKAARIRRATRARRKLKELGATRLVVHRTPRHIYAQVIAPNGSEILVAASTVEKAINEQLKYAGNKDAAAAVGKAVAERALEKGITKVSFDRSGFQYHGRVQALADAAREAGLQF.

Belongs to the universal ribosomal protein uL18 family. In terms of assembly, part of the 50S ribosomal subunit; part of the 5S rRNA/L5/L18/L25 subcomplex. Contacts the 5S and 23S rRNAs.

Its function is as follows. This is one of the proteins that bind and probably mediate the attachment of the 5S RNA into the large ribosomal subunit, where it forms part of the central protuberance. This Yersinia enterocolitica serotype O:8 / biotype 1B (strain NCTC 13174 / 8081) protein is Large ribosomal subunit protein uL18.